The chain runs to 104 residues: Cuticle protein 67, isoform B (104 aa).

A run of 7 repeats spans residues 7–10 (AAPA), 14–17 (AAPA), 21–24 (AAPA), 28–31 (AAPA), 85–88 (AAPA), 92–95 (AAPA), and 98–101 (AAPA).

Component of the cuticle of migratory locust which contains more than 100 different structural proteins. The sequence is that of Cuticle protein 67, isoform B from Locusta migratoria (Migratory locust).